A 458-amino-acid polypeptide reads, in one-letter code: Pyruvate kinase (458 aa).

Arg-33 serves as a coordination point for substrate. Asn-35, Ser-37, and Asp-67 together coordinate K(+). ATP is bound at residue 35–38 (NASH). Positions 74 and 148 each coordinate ATP. Glu-214 is a binding site for Mg(2+). Gly-237, Asp-238, and Thr-270 together coordinate substrate. Asp-238 serves as a coordination point for Mg(2+).

The protein belongs to the pyruvate kinase family. In terms of assembly, homotetramer. It depends on a divalent metal cation as a cofactor.

It carries out the reaction pyruvate + ATP = phosphoenolpyruvate + ADP + H(+). It participates in carbohydrate degradation; glycolysis; pyruvate from D-glyceraldehyde 3-phosphate: step 5/5. Not activated by classical allosteric effectors. The polypeptide is Pyruvate kinase (pyk) (Aeropyrum pernix (strain ATCC 700893 / DSM 11879 / JCM 9820 / NBRC 100138 / K1)).